The sequence spans 565 residues: Proline--tRNA ligase (565 aa).

This sequence belongs to the class-II aminoacyl-tRNA synthetase family. ProS type 1 subfamily. In terms of assembly, homodimer.

It is found in the cytoplasm. The catalysed reaction is tRNA(Pro) + L-proline + ATP = L-prolyl-tRNA(Pro) + AMP + diphosphate. Its function is as follows. Catalyzes the attachment of proline to tRNA(Pro) in a two-step reaction: proline is first activated by ATP to form Pro-AMP and then transferred to the acceptor end of tRNA(Pro). As ProRS can inadvertently accommodate and process non-cognate amino acids such as alanine and cysteine, to avoid such errors it has two additional distinct editing activities against alanine. One activity is designated as 'pretransfer' editing and involves the tRNA(Pro)-independent hydrolysis of activated Ala-AMP. The other activity is designated 'posttransfer' editing and involves deacylation of mischarged Ala-tRNA(Pro). The misacylated Cys-tRNA(Pro) is not edited by ProRS. This is Proline--tRNA ligase from Lactobacillus acidophilus (strain ATCC 700396 / NCK56 / N2 / NCFM).